The following is a 504-amino-acid chain: Maturase K (504 aa).

This sequence belongs to the intron maturase 2 family. MatK subfamily.

The protein localises to the plastid. It localises to the chloroplast. Usually encoded in the trnK tRNA gene intron. Probably assists in splicing its own and other chloroplast group II introns. This is Maturase K from Pseudoturritis turrita (Tower rock-cress).